The following is a 516-amino-acid chain: Nucleolar complex protein 4 homolog (516 aa).

3 consecutive transmembrane segments (helical) span residues 296 to 316, 347 to 367, and 375 to 395; these read SACD…FILI, FFHL…LVAA, and LALT…CNLL.

This sequence belongs to the CBF/MAK21 family.

The protein localises to the nucleus membrane. Its subcellular location is the nucleus. It is found in the nucleolus. This is Nucleolar complex protein 4 homolog (Noc4l) from Mus musculus (Mouse).